Consider the following 122-residue polypeptide: Ribosome-binding factor A (122 aa).

This sequence belongs to the RbfA family. As to quaternary structure, monomer. Binds 30S ribosomal subunits, but not 50S ribosomal subunits or 70S ribosomes.

The protein localises to the cytoplasm. One of several proteins that assist in the late maturation steps of the functional core of the 30S ribosomal subunit. Associates with free 30S ribosomal subunits (but not with 30S subunits that are part of 70S ribosomes or polysomes). Required for efficient processing of 16S rRNA. May interact with the 5'-terminal helix region of 16S rRNA. The protein is Ribosome-binding factor A of Cupriavidus pinatubonensis (strain JMP 134 / LMG 1197) (Cupriavidus necator (strain JMP 134)).